A 491-amino-acid chain; its full sequence is Glutamyl-tRNA(Gln) amidotransferase subunit A (491 aa).

Residues Lys76 and Ser154 each act as charge relay system in the active site. Residue Ser178 is the Acyl-ester intermediate of the active site.

It belongs to the amidase family. GatA subfamily. Heterotrimer of A, B and C subunits.

The catalysed reaction is L-glutamyl-tRNA(Gln) + L-glutamine + ATP + H2O = L-glutaminyl-tRNA(Gln) + L-glutamate + ADP + phosphate + H(+). Functionally, allows the formation of correctly charged Gln-tRNA(Gln) through the transamidation of misacylated Glu-tRNA(Gln) in organisms which lack glutaminyl-tRNA synthetase. The reaction takes place in the presence of glutamine and ATP through an activated gamma-phospho-Glu-tRNA(Gln). This Cereibacter sphaeroides (strain ATCC 17025 / ATH 2.4.3) (Rhodobacter sphaeroides) protein is Glutamyl-tRNA(Gln) amidotransferase subunit A.